The chain runs to 768 residues: Glucoamylase S2 (768 aa).

An N-terminal signal peptide occupies residues 1–21 (MQRPFLLAYLVLSLLFNSALG). Disordered stretches follow at residues 29-83 (RGSS…ETTI) and 125-149 (TTTV…PTTP). The span at 30 to 48 (GSSSSNITSSGPSSTPFSS) shows a compositional bias: low complexity. Residue N35 is glycosylated (N-linked (GlcNAc...) asparagine). Residues 49–66 (ATESFSTGTTVTPSSSKY) are compositionally biased toward polar residues. 2 stretches are compositionally biased toward low complexity: residues 71–83 (TETS…ETTI) and 131–149 (STSP…PTTP). N-linked (GlcNAc...) asparagine glycans are attached at residues N309, N323, N415, N424, and N435. The h subunit stretch occupies residues 349–692 (VSIERIFENI…ASTTLYQLIY (344 aa)). W456 lines the substrate pocket. N-linked (GlcNAc...) asparagine glycosylation occurs at N514. The Proton acceptor role is filled by D519. The Proton donor role is filled by E522. Residues N547, N646, N651, N721, and N742 are each glycosylated (N-linked (GlcNAc...) asparagine). A y subunit region spans residues 693 to 768 (RHISEQHDLV…LKATWEQTGN (76 aa)).

The protein belongs to the glycosyl hydrolase 15 family.

It carries out the reaction Hydrolysis of terminal (1-&gt;4)-linked alpha-D-glucose residues successively from non-reducing ends of the chains with release of beta-D-glucose.. In Saccharomyces cerevisiae (Baker's yeast), this protein is Glucoamylase S2 (STA2).